Reading from the N-terminus, the 275-residue chain is Large ribosomal subunit protein uL2 (275 aa).

The interval 224-275 (VMNPVDHPHGGGEGKSPIGRPSPVTPWGKPTLGYKTRKKNKASDKFIIKRRK) is disordered. The span at 264–275 (KASDKFIIKRRK) shows a compositional bias: basic and acidic residues.

Belongs to the universal ribosomal protein uL2 family. In terms of assembly, part of the 50S ribosomal subunit. Forms a bridge to the 30S subunit in the 70S ribosome.

Functionally, one of the primary rRNA binding proteins. Required for association of the 30S and 50S subunits to form the 70S ribosome, for tRNA binding and peptide bond formation. It has been suggested to have peptidyltransferase activity; this is somewhat controversial. Makes several contacts with the 16S rRNA in the 70S ribosome. The protein is Large ribosomal subunit protein uL2 of Acetivibrio thermocellus (strain ATCC 27405 / DSM 1237 / JCM 9322 / NBRC 103400 / NCIMB 10682 / NRRL B-4536 / VPI 7372) (Clostridium thermocellum).